A 772-amino-acid polypeptide reads, in one-letter code: Hyperosmolality-gated Ca2+ permeable channel 1.1 (772 aa).

Residues 1–5 (MATLK) lie on the Extracellular side of the membrane. A helical membrane pass occupies residues 6-28 (DIGVSAGINILTAFIFFIIFAFL). Residues 29–100 (RLQPFNDRVY…AGLDSVVYLR (72 aa)) lie on the Cytoplasmic side of the membrane. Residues 101–122 (IYWLGLKIFAPIAMLAWAVLVP) traverse the membrane as a helical segment. Residues 123 to 159 (VNWTNNELELAKHFKNVTSSDIDKLTISNIPEGSNRF) lie on the Extracellular side of the membrane. Asparagine 138 is a glycosylation site (N-linked (GlcNAc) asparagine). The chain crosses the membrane as a helical span at residues 160–180 (WAHIIMAYAFTIWTCYMLMKE). At 181–372 (YETVANMRLQ…PNLAIPYVSL (192 aa)) the chain is on the cytoplasmic side. The cytoplasmic region required for homodimerization stretch occupies residues 339-344 (QTTQTR). Residues 373-398 (TVRRLVMNVAFFFLTFFFIIPIAFVQ) traverse the membrane as a helical segment. The Extracellular portion of the chain corresponds to 399 to 424 (SLATIEGIEKVAPFLKVIIEKDFIKS). A helical membrane pass occupies residues 425-450 (LIQGLLAGIALKLFLIFLPAILMTMS). At 451-461 (KFEGFTSVSFL) the chain is on the cytoplasmic side. The helical transmembrane segment at 462–485 (ERRSASRYYIFNLVNVFLGSVIAG) threads the bilayer. Topologically, residues 486–509 (AAFEQLNSFLNQSPNQIPKTIGMA) are extracellular. A helical membrane pass occupies residues 510–538 (IPMKATFFITYIMVDGWAGVAGEILMLKP). The Cytoplasmic segment spans residues 539–566 (LIIYHLKNAFLVKTEKDREEAMNPGSIG). The chain crosses the membrane as a helical span at residues 567 to 587 (FNTGEPQIQLYFLLGLVYAPV). A topological domain (extracellular) is located at residue threonine 588. The helical transmembrane segment at 589–606 (PMLLPFILVFFALAYVVY) threads the bilayer. Topologically, residues 607 to 624 (RHQIINVYNQEYESAAAF) are cytoplasmic. Residues 625-647 (WPDVHGRVITALIISQLLLMGLL) form a helical membrane-spanning segment. Topologically, residues 648-653 (GTKHAA) are extracellular. The helical transmembrane segment at 654–674 (SAAPFLIALPVITIGFHRFCK) threads the bilayer. Residues 675–772 (GRFEPAFVRY…SLAVINGKEV (98 aa)) lie on the Cytoplasmic side of the membrane. Residues 686 to 688 (LQE) form a cytoplasmic region required for homodimerization region. The segment at 743–772 (KRQSRRNTPAPSRISGESSPSLAVINGKEV) is disordered. Over residues 748 to 763 (RNTPAPSRISGESSPS) the composition is skewed to polar residues.

It belongs to the CSC1 (TC 1.A.17) family. Homodimer. Expressed in leaves, flowers, roots and guard cells.

Its subcellular location is the cell membrane. With respect to regulation, activated by mechanical pressure. Its function is as follows. Acts as a hyperosmolarity-gated non-selective cation channel that permeates Ca(2+) ions. Shows the following permeability sequence: K(+) &gt; Ba(2+) = Ca(2+) &gt; Na(+) = Mg(2+) = Cs(+). Mechanosensitive ion channel that converts mechanical stimuli into a flow of ions: activated in response to membrane stretch and poke. The polypeptide is Hyperosmolality-gated Ca2+ permeable channel 1.1 (Arabidopsis thaliana (Mouse-ear cress)).